A 495-amino-acid polypeptide reads, in one-letter code: Tripartite motif-containing protein 5 (495 aa).

N-acetylalanine is present on Ala2. The RING-type zinc finger occupies 15–60 (CPICLELLTEPLSLHCGHSFCQACITANHKKSMLYKEGERSCPVCR). A Phosphoserine modification is found at Ser87. The segment at 92–133 (QKVDHCARHGEKLLLFCQEDRKVICWLCERSQEHRGHHTFLM) adopts a B box-type zinc-finger fold. Residues Cys97, His100, Cys119, and His125 each contribute to the Zn(2+) site. Positions 137 to 225 (AQEYHVKLQT…LTKSETEMVQ (89 aa)) form a coiled coil. The segment at 187 to 200 (FEQLREILDWEESN) is required for interaction with GABARAP and for autophagy. The B30.2/SPRY domain occupies 283-495 (LKGILDMFRE…VPMTLCSPSS (213 aa)).

It belongs to the TRIM/RBCC family. Can form homodimers and homotrimers. In addition to lower-order dimerization, also exhibits a higher-order multimerization and both low- and high-order multimerizations are essential for its restriction activity. Interacts with BTBD1 and BTBD2. Interacts with PSMC4, PSMC5, PSMD7 and HSPA8/HSC70. Interacts (via B30.2/SPRY domain) with HSPA1A/B. Interacts with PSMC2, MAP3K7/TAK1, TAB2 and TAB3. Interacts with SQSTM1. Interacts with TRIM6 and TRIM34. Interacts with ULK1 (phosphorylated form), GABARAP, GABARAPL1, GABARAPL2, MAP1LC3A, MAP1LC3C and BECN1. Post-translationally, degraded in a proteasome-independent fashion in the absence of viral infection but in a proteasome-dependent fashion following exposure to restriction sensitive virus. Autoubiquitinated in a RING finger- and UBE2D2-dependent manner. Monoubiquitinated by TRIM21. Deubiquitinated by Yersinia YopJ. Ubiquitination may not lead to proteasomal degradation.

The protein localises to the cytoplasm. Its subcellular location is the nucleus. The catalysed reaction is S-ubiquitinyl-[E2 ubiquitin-conjugating enzyme]-L-cysteine + [acceptor protein]-L-lysine = [E2 ubiquitin-conjugating enzyme]-L-cysteine + N(6)-ubiquitinyl-[acceptor protein]-L-lysine.. The protein operates within protein modification; protein ubiquitination. Its function is as follows. Capsid-specific restriction factor that prevents infection from non-host-adapted retroviruses. Blocks viral replication early in the life cycle, after viral entry but before reverse transcription. In addition to acting as a capsid-specific restriction factor, also acts as a pattern recognition receptor that activates innate immune signaling in response to the retroviral capsid lattice. Binding to the viral capsid triggers its E3 ubiquitin ligase activity, and in concert with the heterodimeric ubiquitin conjugating enzyme complex UBE2V1-UBE2N (also known as UBC13-UEV1A complex) generates 'Lys-63'-linked polyubiquitin chains, which in turn are catalysts in the autophosphorylation of the MAP3K7/TAK1 complex (includes TAK1, TAB2, and TAB3). Activation of the MAP3K7/TAK1 complex by autophosphorylation results in the induction and expression of NF-kappa-B and MAPK-responsive inflammatory genes, thereby leading to an innate immune response in the infected cell. Plays a role in regulating autophagy through activation of autophagy regulator BECN1 by causing its dissociation from its inhibitors BCL2 and TAB2. This Pygathrix nemaeus (Red-shanked douc langur) protein is Tripartite motif-containing protein 5 (TRIM5).